A 145-amino-acid chain; its full sequence is Male-specific protein scotti (145 aa).

The segment at 1 to 34 (MANNRLMPEGQIIEEDMDGEDQNARELDIDDDDD) is disordered. Over residues 12–21 (IIEEDMDGED) the composition is skewed to acidic residues.

It belongs to the male-specific scotti family.

Functionally, post-meiotically transcribed gene that has a role in late spermiogenesis; required for actin cone progression during spermatid individualization. This Drosophila willistoni (Fruit fly) protein is Male-specific protein scotti.